A 128-amino-acid polypeptide reads, in one-letter code: Small ribosomal subunit protein uS9c (128 aa).

Belongs to the universal ribosomal protein uS9 family.

It localises to the plastid. The protein is Small ribosomal subunit protein uS9c (rps9) of Euglena longa (Euglenophycean alga).